The sequence spans 109 residues: Thiosulfate sulfurtransferase GlpE (109 aa).

Positions 17-105 (AQGQALLLDI…WQRAYPEEVA (89 aa)) constitute a Rhodanese domain. The active-site Cysteine persulfide intermediate is the cysteine 65.

The protein belongs to the GlpE family.

The protein localises to the cytoplasm. The enzyme catalyses thiosulfate + hydrogen cyanide = thiocyanate + sulfite + 2 H(+). It carries out the reaction thiosulfate + [thioredoxin]-dithiol = [thioredoxin]-disulfide + hydrogen sulfide + sulfite + 2 H(+). Its function is as follows. Transferase that catalyzes the transfer of sulfur from thiosulfate to thiophilic acceptors such as cyanide or dithiols. May function in a CysM-independent thiosulfate assimilation pathway by catalyzing the conversion of thiosulfate to sulfite, which can then be used for L-cysteine biosynthesis. The polypeptide is Thiosulfate sulfurtransferase GlpE (Edwardsiella ictaluri (strain 93-146)).